Consider the following 651-residue polypeptide: MGQIFPRSANPIPRPPRGLATHHWLNFLQAAYRLEPGPSSYDFHQLKTVLKMALETPVWMCPINYSLLASLLPKGYPGQVNEILQVLIQTQTQIPSHPAPPPPSSPTHDPPDSDPQIPPPYVEPTAPQVLPVMHPHGVPPTHRPWQMKDLQAIKQEVSQAAPGSPQFMQTIRLAVQQFDPTAKDLQDLLQYLCSSLVASLHHQQLDSLISEAETRGITGYNPLAGPLRVQANNPQQQGLRREYQQLWLTAFAALPGSAKDPSWASILQGLEEPYHTFVERLNVALDNGLPEGTPKDPILRSLAYSNANKECQKLLQARGHTNSPLGDMLRACQAWTPRDKTKVLVVQPKKPPPNQPCFRCGKAGHWSRDCAQPRPPPGPCPLCQDPTHWKRDCPRLKPAIPEPEPEEDALLLDLPADIPHPKNLHRGGGLTSPPTLRQVHPNKDPASILPVIPLDPARRPLIKAQVDTQTSHPRTIEALLDTGADMTVLPIALFSSDTPLKDTSVLGAGGQTQDHFKLTSLPVLIRLPFRTTPIVLTSCLVDTKNNWAIIGRDALQQCQGVLYLPEAKRPPVILPIQAPAVLGLEHLPRPPEISQFPLNQNASRPCNTWSGRPWRQAISNRTPGQEITQYSQLKRPMEPGDSSTTCGPLIL.

Gly-2 carries N-myristoyl glycine; by host lipidation. Residues 93–143 are disordered; sequence QIPSHPAPPPPSSPTHDPPDSDPQIPPPYVEPTAPQVLPVMHPHGVPPTHR. Position 105 is a phosphoserine; by host MAPK1 (Ser-105). Residues 118 to 121 carry the PPXY motif motif; it reads PPPY. Residues 124–127 carry the PTAP/PSAP motif motif; that stretch reads PTAP. CCHC-type zinc fingers lie at residues 355-372 and 378-395; these read QPCFRCGKAGHWSRDCAQ and GPCPLCQDPTHWKRDCPR. The Peptidase A2 domain maps to 476–554; sequence IEALLDTGAD…NNWAIIGRDA (79 aa). The For protease activity; shared with dimeric partner role is filled by Asp-481. A disordered region spans residues 632 to 651; sequence QLKRPMEPGDSSTTCGPLIL. Residues 641–651 show a composition bias toward polar residues; it reads DSSTTCGPLIL.

Homodimer; the homodimers are part of the immature particles. Interacts with human TSG101 and NEDD4; these interactions are essential for budding and release of viral particles. In terms of assembly, homodimer; further assembles as homohexamers. In terms of processing, specific enzymatic cleavages by the viral protease yield mature proteins. The polyprotein is cleaved during and after budding, this process is termed maturation. The protease is autoproteolytically processed at its N- and C-termini. Post-translationally, phosphorylation of the matrix protein p19 by MAPK1 seems to play a role in budding. Myristoylated. Myristoylation of the matrix (MA) domain mediates the transport and binding of Gag polyproteins to the host plasma membrane and is required for the assembly of viral particles.

Its subcellular location is the virion. Its function is as follows. The matrix domain targets Gag, Gag-Pro and Gag-Pro-Pol polyproteins to the plasma membrane via a multipartite membrane binding signal, that includes its myristoylated N-terminus. Matrix protein. Functionally, forms the spherical core of the virus that encapsulates the genomic RNA-nucleocapsid complex. In terms of biological role, binds strongly to viral nucleic acids and promote their aggregation. Also destabilizes the nucleic acids duplexes via highly structured zinc-binding motifs. Its function is as follows. The aspartyl protease mediates proteolytic cleavages of Gag and Gag-Pol polyproteins during or shortly after the release of the virion from the plasma membrane. Cleavages take place as an ordered, step-wise cascade to yield mature proteins. This process is called maturation. Displays maximal activity during the budding process just prior to particle release from the cell (Potential). Cleaves the translation initiation factor eIF4G leading to the inhibition of host cap-dependent translation. The protein is Gag-Pro polyprotein (gag-pro) of Human T-cell leukemia virus 1 (isolate Melanesia mel5 subtype C) (HTLV-1).